The chain runs to 54 residues: H-bracotoxin-Cf4 (54 aa).

The first 21 residues, 1–21 (MSKLFIFFLLVALLAFVSSEA), serve as a signal peptide directing secretion. Cystine bridges form between Cys-24–Cys-39, Cys-31–Cys-43, and Cys-38–Cys-53.

Expressed by the venom duct.

The protein resides in the secreted. Its function is as follows. This endoparasitoid wasp peptide has a role in disruption of the cellular host immune response, since it reduces the capacity of D.saccharalis hemocytes to encapsulate foreign bodies. On the other hand, it shows no effect on the humoral immune response, since it has no effect on phenoloxidase activity. In Cotesia flavipes (Parasitic wasp), this protein is H-bracotoxin-Cf4.